Reading from the N-terminus, the 274-residue chain is Type II restriction enzyme XamI (274 aa).

It carries out the reaction Endonucleolytic cleavage of DNA to give specific double-stranded fragments with terminal 5'-phosphates.. Functionally, a P subtype restriction enzyme that recognizes the double-stranded sequence 5'-GTCGAC-3' and cleaves after G-1. The polypeptide is Type II restriction enzyme XamI (xamIR) (Xanthomonas campestris pv. amaranthicola).